Consider the following 96-residue polypeptide: uncharacterized protein (96 aa).

Helical transmembrane passes span 14 to 34, 38 to 58, and 67 to 87; these read FIEG…KYWA, LAVT…LLVL, and WPLK…GNFL.

It localises to the cell membrane. This is an uncharacterized protein from Bacillus subtilis (strain 168).